A 1527-amino-acid polypeptide reads, in one-letter code: MSIRLPHSIDRSASKKQSHLSSPIASWLSSLSSLGDSTPERTSPSHHRQPSDTSETTAGLVQRCVIIQKDQHGFGFTVSGDRIVLVQSVRPGGAAMKAGVKEGDRIIKVNGTMVTNSSHLEVVKLIKSGAYAALTLLGSSPPSVGVSGLQQNPSVAGVLRVNPIIPPPPPPPPLPPPQHITGPKPLQDPEVQKHATQILWNMLRQEEEELQDILPPCGETSQRTCEGRLSVDSQEADSGLDSGTERFPSISESLMNRNSVLSDPGLDSPQTSPVILARVAQHHRRQGSDAALLPLNHQGIDQSPKPLIIGPEEDYDPGYFNNESDIIFQDLEKLKSHPAYLVVFLRYILSQADPGPLLFYLCSEVYQQTNPKDSRSLGKDIWNIFLEKNAPLRVKIPEMLQAEIDLRLRNNEDPRNVLCEAQEAVMLEIQEQINDYRSKRTLGLGSLYGENDLLGLDGDPLRERQMAEKQLAALGDILSKYEEDRSAPMDFAVNTFMSHAGIRLRESRSSCTAEKTQSAPDKDKWLPFFPKTKKQSSNSKKEKDALEDKKRNPILRYIGKPKSSSQSIKPGNVRNIIQHFENSHQYDVPEPGTQRLSTGSFPEDLLESDSSRSEIRLGRSGSLKGREEMKRSRKAENVPRPRSDVDMDAAAEAARLHQSASSSASSLSTRSLENPTPPFTPKMGRRSIESPNLGFCTDVILPHLLEDDLGQLSDLEPEPEVQNWQHTVGKDVVANLTQREIDRQEVINELFVTEASHLRTLRVLDLIFYQRMRKENLMPREELARLFPNLPELIEIHNSWCEAMKKLREEGPIIRDISDPMLARFDGPAREELQQVAAQFCSYQSVALELIRTKQRKESRFQLFMQEAESHPQCRRLQLRDLIVSEMQRLTKYPLLLENIIKHTEGGTSEHEKLCRARDQCREILKFVNEAVKQTENRHRLEGYQKRLDATALERASNPLAAEFKSLDLTTRKMIHEGPLTWRISKDKTLDLQVLLLEDLVVLLQRQEERLLLKCHSKTAVGSSDSKQTFSPVLKLNAVLIRSVATDKRAFFIICTSELGPPQIYELVALTSSDKNIWMELLEEAVQNATKHPGAAPIPIHPSPPGSQEPAYQGSTSSRVEINDSEVYHTEKEPKKLPEGPGPEQRVQDKQLIAQGEPVQEEDEEELRTLPRAPPSLDGENRGIRTRDPVLLALTGPLLMEGLADAALEDVENLRHLILWSLLPGHTVKTQAAGEPEDDLTPTPSVVSITSHPWDPGSPGQAPTISDSTRLARPEGSQPEGEDVAVSSLAHLPPRTRSSGVWDSPELDRNPAAEAASTEPAASYKVVRKVSLLPGGGVGAAKVAGSNAIPDSGQSESELSEVEGGAQATGNCFYVSMPAGPLDSSTEPTGTPPSPSQCHSLPAWPTEPQPYRGVRGGQCSSLVRRDVDVIFHTIEQLTIKLHRLKDMELAHRELLKSLGGESSGGTTPVGSFHTEAARWTDYSLSPPAKEALASDSQNGQEQGSCPEEGSDIALEDSATDTAVSPGP.

Positions 1 to 56 are disordered; that stretch reads MSIRLPHSIDRSASKKQSHLSSPIASWLSSLSSLGDSTPERTSPSHHRQPSDTSET. 4 positions are modified to phosphoserine: Ser-2, Ser-30, Ser-32, and Ser-51. Over residues 19–37 the composition is skewed to low complexity; sequence HLSSPIASWLSSLSSLGDS. The PDZ domain maps to 64-143; it reads CVIIQKDQHG…LTLLGSSPPS (80 aa). Residues 216–247 form a disordered region; the sequence is PCGETSQRTCEGRLSVDSQEADSGLDSGTERF. Residues Ser-262 and Ser-268 each carry the phosphoserine modification. The residue at position 271 (Thr-271) is a Phosphothreonine. 2 positions are modified to phosphoserine: Ser-272 and Ser-288. Residues 323-503 form the RGSL domain; it reads ESDIIFQDLE…NTFMSHAGIR (181 aa). Residues 461–487 adopt a coiled-coil conformation; it reads LRERQMAEKQLAALGDILSKYEEDRSA. Disordered regions lie at residues 506–569 and 582–687; these read ESRS…QSIK and NSHQ…GRRS. Polar residues predominate over residues 509–519; that stretch reads SSCTAEKTQSA. Composition is skewed to basic and acidic residues over residues 539 to 551 and 624 to 645; these read SKKEKDALEDKKR and KGREEMKRSRKAENVPRPRSDV. A phosphoserine mark is found at Ser-643 and Ser-671. Residues 656–672 are compositionally biased toward low complexity; that stretch reads LHQSASSSASSLSTRSL. 2 positions are modified to phosphothreonine: Thr-676 and Thr-680. The DH domain occupies 742 to 931; that stretch reads DRQEVINELF…REILKFVNEA (190 aa). The region spanning 973 to 1087 is the PH domain; the sequence is KMIHEGPLTW…WMELLEEAVQ (115 aa). Disordered stretches follow at residues 1090–1184, 1231–1321, and 1379–1411; these read TKHP…NRGI, QAAG…TEPA, and AGPLDSSTEPTGTPPSPSQCHSLPAWPTEPQPY. Over residues 1126-1138 the composition is skewed to basic and acidic residues; it reads EVYHTEKEPKKLP. Polar residues predominate over residues 1242 to 1251; the sequence is PTPSVVSITS. Ser-1299 and Ser-1304 each carry phosphoserine. A compositionally biased stretch (low complexity) spans 1312 to 1321; sequence AAEAASTEPA. Phosphoserine is present on residues Ser-1462 and Ser-1463. A phosphothreonine mark is found at Thr-1467 and Thr-1480. A disordered region spans residues 1480–1527; sequence TDYSLSPPAKEALASDSQNGQEQGSCPEEGSDIALEDSATDTAVSPGP. Position 1485 is a phosphoserine (Ser-1485). The segment covering 1494–1503 has biased composition (polar residues); that stretch reads SDSQNGQEQG. Residues 1508-1518 show a composition bias toward acidic residues; it reads EGSDIALEDSA.

As to quaternary structure, interacts with RHOA, GNA13 and SLC1A6. Interacts with GNA12, PLXNB1 and PLXNB2. Interacts (via DH domain) with GCSAM (via C-terminus). Found in a complex with ARHGEF11 and ARHGEF12; binding to ARHGEF11 and ARHGEF12 enhances CDC42 GEF activity of PLEKHG4B, and PLEKHG4B, in turn, inhibits ARHGEF11- and ARHGEF12-mediated RHOA activation. Phosphorylated by MAP kinase p38 (MAPK11, MAPK12, MAPK13 and/or MAPK14). Post-translationally, ubiquitinated by the BCR(KLHL20) E3 ubiquitin ligase complex when previously phosphorylated by MAP kinase p38 (MAPK11, MAPK12, MAPK13 and/or MAPK14), leading to its degradation, thereby restricting RhoA activity and facilitating growth cone spreading and neurite outgrowth.

The protein resides in the cytoplasm. It is found in the membrane. May play a role in the regulation of RhoA GTPase by guanine nucleotide-binding alpha-12 (GNA12) and alpha-13 (GNA13). Acts as guanine nucleotide exchange factor (GEF) for RhoA GTPase and may act as GTPase-activating protein (GAP) for GNA12 and GNA13. Involved in neurotrophin-induced neurite outgrowth. In Rattus norvegicus (Rat), this protein is Rho guanine nucleotide exchange factor 11 (Arhgef11).